A 377-amino-acid polypeptide reads, in one-letter code: tRNA(Met) cytidine acetate ligase (377 aa).

ATP contacts are provided by residues 7 to 20 (ITEYNPFHNGHLFH), glycine 100, asparagine 153, and arginine 178.

This sequence belongs to the TmcAL family.

The protein resides in the cytoplasm. The catalysed reaction is cytidine(34) in elongator tRNA(Met) + acetate + ATP = N(4)-acetylcytidine(34) in elongator tRNA(Met) + AMP + diphosphate. Its function is as follows. Catalyzes the formation of N(4)-acetylcytidine (ac(4)C) at the wobble position of elongator tRNA(Met), using acetate and ATP as substrates. First activates an acetate ion to form acetyladenylate (Ac-AMP) and then transfers the acetyl group to tRNA to form ac(4)C34. The protein is tRNA(Met) cytidine acetate ligase of Staphylococcus epidermidis (strain ATCC 12228 / FDA PCI 1200).